Here is a 103-residue protein sequence, read N- to C-terminus: Large ribosomal subunit protein bL21 (103 aa).

The protein belongs to the bacterial ribosomal protein bL21 family. As to quaternary structure, part of the 50S ribosomal subunit. Contacts protein L20.

In terms of biological role, this protein binds to 23S rRNA in the presence of protein L20. This chain is Large ribosomal subunit protein bL21, found in Desulfotalea psychrophila (strain LSv54 / DSM 12343).